Here is a 657-residue protein sequence, read N- to C-terminus: Pentatricopeptide repeat-containing protein At2g37310 (657 aa).

PPR repeat units follow at residues 21–55 (DGGAYGHLIQHFTRHRLPLHVLQLHARIVVFSIKP), 56–86 (DNFLASKLISFYTRQDRFRQALHVFDEITVR), 87–121 (NAFSYNALLIAYTSREMYFDAFSLFLSWIGSSCYS), 128–165 (DSISISCVLKALSGCDDFWLGSLARQVHGFVIRGGFDS), 166–196 (DVFVGNGMITYYTKCDNIESARKVFDEMSER), 197–232 (DVVSWNSMISGYSQSGSFEDCKKMYKAMLACSDFKP), 233–267 (NGVTVISVFQACGQSSDLIFGLEVHKKMIENHIQM), 268–298 (DLSLCNAVIGFYAKCGSLDYARALFDEMSEK), 299–333 (DSVTYGAIISGYMAHGLVKEAMALFSEMESIGLST), 334–364 (WNAMISGLMQNNHHEEVINSFREMIRCGSRP), 365–399 (NTVTLSSLLPSLTYSSNLKGGKEIHAFAIRNGADN), 400–430 (NIYVTTSIIDNYAKLGFLLGAQRVFDNCKDR), 431–465 (SLIAWTAIITAYAVHGDSDSACSLFDQMQCLGTKP), 466–501 (DDVTLTAVLSAFAHSGDSDMAQHIFDSMLTKYDIEP), and 502–536 (GVEHYACMVSVLSRAGKLSDAMEFISKMPIDPIAK). The type E motif stretch occupies residues 537–612 (VWGALLNGAS…IPGTSWIETE (76 aa)). Positions 613-643 (KGLRSFIAKDSSCERSKEMYEIIEGLVESMS) are type E(+) motif.

It belongs to the PPR family. PCMP-E subfamily.

This chain is Pentatricopeptide repeat-containing protein At2g37310 (PCMP-E49), found in Arabidopsis thaliana (Mouse-ear cress).